The primary structure comprises 284 residues: 2-dehydro-3-deoxyphosphooctonate aldolase (284 aa).

It belongs to the KdsA family.

It localises to the cytoplasm. The enzyme catalyses D-arabinose 5-phosphate + phosphoenolpyruvate + H2O = 3-deoxy-alpha-D-manno-2-octulosonate-8-phosphate + phosphate. It participates in carbohydrate biosynthesis; 3-deoxy-D-manno-octulosonate biosynthesis; 3-deoxy-D-manno-octulosonate from D-ribulose 5-phosphate: step 2/3. Its pathway is bacterial outer membrane biogenesis; lipopolysaccharide biosynthesis. The chain is 2-dehydro-3-deoxyphosphooctonate aldolase from Burkholderia orbicola (strain MC0-3).